The chain runs to 142 residues: Universal stress protein C (142 aa).

It belongs to the universal stress protein A family.

The protein resides in the cytoplasm. In terms of biological role, required for resistance to DNA-damaging agents. The protein is Universal stress protein C (uspC) of Escherichia coli O6:H1 (strain CFT073 / ATCC 700928 / UPEC).